The following is a 749-amino-acid chain: Transcription factor RFX3 (749 aa).

Residues 183-258 constitute a DNA-binding region (RFX-type winged-helix); the sequence is HLQWLLDNYE…YHYYGIRVKP (76 aa). A disordered region spans residues 663 to 699; it reads VSPGNLDKDEGSEVESEMDEELDDSSEPQAKREKTEL. Residues 674–688 are compositionally biased toward acidic residues; the sequence is SEVESEMDEELDDSS.

It belongs to the RFX family. In terms of assembly, heterodimer; heterodimerizes with RFX1 and RFX2, and RFX6.

It is found in the nucleus. Transcription factor required for ciliogenesis and islet cell differentiation during endocrine pancreas development. Essential for the differentiation of nodal monocilia and left-right asymmetry specification during embryogenesis. Required for the biogenesis of motile cilia by governing growth and beating efficiency of motile cells. Also required for ciliated ependymal cell differentiation. Regulates the expression of genes involved in ciliary assembly (DYNC2LI1, FOXJ1 and BBS4) and genes involved in ciliary motility (DNAH11, DNAH9 and DNAH5). Together with RFX6, participates in the differentiation of 4 of the 5 islet cell types during endocrine pancreas development, with the exception of pancreatic PP (polypeptide-producing) cells. Regulates transcription by forming a heterodimer with another RFX protein and binding to the X-box in the promoter of target genes. Represses transcription of MAP1A in non-neuronal cells but not in neuronal cells. In Macaca fascicularis (Crab-eating macaque), this protein is Transcription factor RFX3 (RFX3).